We begin with the raw amino-acid sequence, 361 residues long: MSVPFDPASYDRQLEEKTVRLRELLAPFDAPEPQVFDSPREHYRLRAEFRLWREDQKRYYAMFAPGDNRTPILLEGLPIASERINALMPVLRERWEASPTLNHKLFQVDFLTTLAGDAMITLCYHRPLDAEWQAAAAQLAAELDVSLIGRSKGQKLVIGHDYVTEKLDVAGRTFSYRQPEGAFTQPNGTVNGKMLNWAFDALGERQDDLLELYCGNGNFTLPLATRVRKVLATEISKTSVNAALSNLDDNGVDNVTLVRLSAEELTEALNEVRPFRRLHGVDLKSYDFGSVFVDPPRAGMDPDTCELTRRFERILYISCNPETLAANIAQLHDTHRVERCALFDQFPYTHHMESGVLLVRR.

Residues Q185, Y213, N218, E234, and D294 each contribute to the S-adenosyl-L-methionine site. C319 acts as the Nucleophile in catalysis. The active-site Proton acceptor is the E353.

This sequence belongs to the class I-like SAM-binding methyltransferase superfamily. RNA M5U methyltransferase family. TrmA subfamily.

It catalyses the reaction uridine(54) in tRNA + S-adenosyl-L-methionine = 5-methyluridine(54) in tRNA + S-adenosyl-L-homocysteine + H(+). The catalysed reaction is uridine(341) in tmRNA + S-adenosyl-L-methionine = 5-methyluridine(341) in tmRNA + S-adenosyl-L-homocysteine + H(+). Its function is as follows. Dual-specificity methyltransferase that catalyzes the formation of 5-methyluridine at position 54 (m5U54) in all tRNAs, and that of position 341 (m5U341) in tmRNA (transfer-mRNA). This chain is tRNA/tmRNA (uracil-C(5))-methyltransferase, found in Pseudomonas syringae pv. syringae (strain B728a).